The sequence spans 93 residues: UPF0728 protein C10orf53 (93 aa).

The protein belongs to the UPF0728 family.

The protein is UPF0728 protein C10orf53 (C10orf53) of Homo sapiens (Human).